The sequence spans 207 residues: Large ribosomal subunit protein uL4 (207 aa).

The interval 56-76 is disordered; sequence EVRGGGRKPWRQKGTGRARAG. Residues 60–71 are compositionally biased toward basic residues; sequence GGRKPWRQKGTG.

This sequence belongs to the universal ribosomal protein uL4 family. In terms of assembly, part of the 50S ribosomal subunit.

In terms of biological role, one of the primary rRNA binding proteins, this protein initially binds near the 5'-end of the 23S rRNA. It is important during the early stages of 50S assembly. It makes multiple contacts with different domains of the 23S rRNA in the assembled 50S subunit and ribosome. Its function is as follows. Forms part of the polypeptide exit tunnel. The sequence is that of Large ribosomal subunit protein uL4 from Desulfitobacterium hafniense (strain DSM 10664 / DCB-2).